The sequence spans 490 residues: Probable cytosol aminopeptidase (490 aa).

Residues K257 and D262 each coordinate Mn(2+). Residue K269 is part of the active site. Positions 281, 341, and 343 each coordinate Mn(2+). R345 is an active-site residue.

The protein belongs to the peptidase M17 family. Requires Mn(2+) as cofactor.

It is found in the cytoplasm. It catalyses the reaction Release of an N-terminal amino acid, Xaa-|-Yaa-, in which Xaa is preferably Leu, but may be other amino acids including Pro although not Arg or Lys, and Yaa may be Pro. Amino acid amides and methyl esters are also readily hydrolyzed, but rates on arylamides are exceedingly low.. It carries out the reaction Release of an N-terminal amino acid, preferentially leucine, but not glutamic or aspartic acids.. Its function is as follows. Presumably involved in the processing and regular turnover of intracellular proteins. Catalyzes the removal of unsubstituted N-terminal amino acids from various peptides. The protein is Probable cytosol aminopeptidase of Prochlorococcus marinus (strain MIT 9215).